A 347-amino-acid chain; its full sequence is Protein RecA (347 aa).

64–71 contacts ATP; sequence GPESSGKT. A disordered region spans residues 328–347; that stretch reads DKVDEDKTEEEASQESLDLK.

Belongs to the RecA family.

It localises to the cytoplasm. Can catalyze the hydrolysis of ATP in the presence of single-stranded DNA, the ATP-dependent uptake of single-stranded DNA by duplex DNA, and the ATP-dependent hybridization of homologous single-stranded DNAs. It interacts with LexA causing its activation and leading to its autocatalytic cleavage. The chain is Protein RecA from Oceanobacillus iheyensis (strain DSM 14371 / CIP 107618 / JCM 11309 / KCTC 3954 / HTE831).